The primary structure comprises 395 residues: Indoleacetate--lysine synthetase (395 aa).

This sequence belongs to the ATP-dependent AMP-binding enzyme family.

It catalyses the reaction (indol-3-yl)acetate + L-lysine + ATP = N(6)-[(indole-3-yl)acetyl]-L-lysine + ADP + phosphate + H(+). In terms of biological role, conversion of IAA to IAA-lysine. This Pseudomonas savastanoi (Pseudomonas syringae pv. savastanoi) protein is Indoleacetate--lysine synthetase (iaaL).